The following is a 147-amino-acid chain: MKVILLKDVKSLGKKGDLVNASDGYARNYLIPKKLAEQATENNVHILNNKKEAERRQKLKELEEAQKLAKSLMGKEIKFKVKIGENGRLFGSITSKDISEKLKEQYNMNIDKKKIVAETIRQTGVYEAEIKIYPEVSTKVKVSVLEE.

Belongs to the bacterial ribosomal protein bL9 family.

Its function is as follows. Binds to the 23S rRNA. The protein is Large ribosomal subunit protein bL9 of Clostridium botulinum (strain ATCC 19397 / Type A).